The sequence spans 230 residues: Response regulator MprA (230 aa).

A Response regulatory domain is found at 4–118 (RILVVDDDRA…ELLARMRALL (115 aa)). D48 is modified (4-aspartylphosphate). A DNA-binding region (ompR/PhoB-type) is located at residues 129–227 (SMAMRFSDLT…VRGVGYVLRE (99 aa)).

As to quaternary structure, monomer. Interaction with each conserved 8-bp repeat requires tandem binding by two protein monomers. In terms of processing, phosphorylated and dephosphorylated by MprB.

It localises to the cytoplasm. Member of the two-component regulatory system MprB/MprA which contributes to maintaining a balance among several systems involved in stress resistance and is required for establishment and maintenance of persistent infection in the host. Functions as a transcriptional regulator that recognizes a 19-bp nucleotide motif comprizing two loosely conserved 8-bp direct DNA-binding motif repeats separated by a 3-bp spacer region. MprB/MprA up-regulates expression of mprA and pepD. The chain is Response regulator MprA (mprA) from Mycobacterium bovis (strain ATCC BAA-935 / AF2122/97).